Here is a 259-residue protein sequence, read N- to C-terminus: Phosphatidylglycerol--prolipoprotein diacylglyceryl transferase (259 aa).

The next 4 helical transmembrane spans lie at 9 to 29 (IIFSIGPLAISWYSLSYVIGI), 55 to 75 (FITYAVIGIIVGGRLGFVLLY), 92 to 112 (EGGMSFHGGALGGIIAAYLFC), and 117 to 137 (INFLSLTDIIAPVVPIGLFLG). Arg-138 is an a 1,2-diacyl-sn-glycero-3-phospho-(1'-sn-glycerol) binding site. The next 3 helical transmembrane spans lie at 172–192 (QLYEAFFEGLVLFSILAYTTF), 201–221 (GLNSGIFFTFYGLFRITIEIF), and 228–248 (IGFILDSLTMGQILSVPMLLL).

The protein belongs to the Lgt family.

It localises to the cell inner membrane. The enzyme catalyses L-cysteinyl-[prolipoprotein] + a 1,2-diacyl-sn-glycero-3-phospho-(1'-sn-glycerol) = an S-1,2-diacyl-sn-glyceryl-L-cysteinyl-[prolipoprotein] + sn-glycerol 1-phosphate + H(+). Its pathway is protein modification; lipoprotein biosynthesis (diacylglyceryl transfer). Functionally, catalyzes the transfer of the diacylglyceryl group from phosphatidylglycerol to the sulfhydryl group of the N-terminal cysteine of a prolipoprotein, the first step in the formation of mature lipoproteins. This chain is Phosphatidylglycerol--prolipoprotein diacylglyceryl transferase, found in Rickettsia conorii (strain ATCC VR-613 / Malish 7).